We begin with the raw amino-acid sequence, 415 residues long: Cell division control protein 11 (415 aa).

N-acetylserine is present on Ser2. Ser2 carries the phosphoserine modification. Residues Arg12–Arg19 carry the Basic motif motif. Residues Arg19 to Gly298 enclose the Septin-type G domain. The tract at residues Gly29–Ser36 is G1 motif. Residues Gly29 to Ser36, Gly92, Lys172 to Glu180, Gly230, and Arg247 contribute to the GTP site. Positions Asp89–Gly92 are G3 motif. Positions Ser171–Asp174 are G4 motif. At Ser305 the chain carries Phosphoserine. Residues Arg307–Met360 form a disordered region. The span at Ser316 to Asn328 shows a compositional bias: low complexity. The residue at position 327 (Thr327) is a Phosphothreonine. Polar residues-rich tracts occupy residues Pro329–Val340 and His348–Tyr359. The stretch at Glu354–Glu414 forms a coiled coil. A Glycyl lysine isopeptide (Lys-Gly) (interchain with G-Cter in SUMO) cross-link involves residue Lys412.

This sequence belongs to the TRAFAC class TrmE-Era-EngA-EngB-Septin-like GTPase superfamily. Septin GTPase family. As to quaternary structure, component of the septin complex which consists of CDC3, CDC10, CDC11, CDC12 and probably SHS1 and rearranges to a cortical collar of highly ordered filaments at the mother-bud-neck. A complex formed by CDC3, CDC10, CDC11 and CDC12 is capable of forming long filaments in vitro and the components seem to be present in a 2:2:2:2 arrangement in vivo. The filaments are proposed to be formed by the end-to-end polymerization of CDC3-CDC12-CDC11 complexes with CDC10 serving as a bridge to bundle the polymers into paired filaments. Component of the GIN4 complex composed of at least BNI5, CDC3, CDC10, CDC11, CDC12, GIN4, NAP1 and SHS1. Self-associates. Interacts with BEM4, KCC4, SPR28 and SYP1. Interacts with BNI5. Sumoylated during mitosis on the mother cell side of the bud neck. Sumoylation probably plays a central role in regulating septin ring disassembly during the cell cycle.

The protein localises to the membrane. It localises to the bud neck. Functionally, septins are GTPases involved in cytokinesis that assemble early in the cell cycle as a patch at the incipient bud site and form a ring approximate 15 minutes before bud emergence, which transforms into an hour-glass shaped collar of cortical filaments that spans both sides of the mother-bud neck. This collar persists until just before cytokinesis, when it splits into two rings that occupy opposite sides of the neck. The septins at the bud neck serve as a structural scaffold that recruits different components involved in diverse processes at specific stages during the cell cycle. Many proteins bind asymmetrically to the septin collar. The septin assembly is regulated by protein kinases GIN4 and/or CLA4. May act by recruiting MYO1 and HOF1, a protein involved in septation, to the site of cleavage. Septins are also involved in cell morphogenesis, bud site selection, chitin deposition, cell cycle regulation, cell compartmentalization and spore wall formation. CDCd11 with SHS1 11 are involved in the recruitment of BNI5 and thereby ensure efficient localization at the bud neck of MYO1, the type II myosin of the actomyosin contractile ring. This Saccharomyces cerevisiae (strain ATCC 204508 / S288c) (Baker's yeast) protein is Cell division control protein 11.